The following is a 580-amino-acid chain: Potassium-transporting ATPase potassium-binding subunit (580 aa).

Transmembrane regions (helical) follow at residues 3 to 23 (ASGA…SVPL), 65 to 85 (DYAF…YALQ), 136 to 156 (GLGV…VALI), 179 to 199 (LYIL…QGVV), 263 to 283 (LSNF…CHTF), 293 to 313 (GWAV…ACVA), 399 to 419 (GLYG…LMVG), 436 to 456 (MASL…AIAV), 504 to 524 (AIGV…LALA), and 546 to 566 (LFVG…FVPA).

It belongs to the KdpA family. In terms of assembly, the system is composed of three essential subunits: KdpA, KdpB and KdpC.

It localises to the cell inner membrane. Functionally, part of the high-affinity ATP-driven potassium transport (or Kdp) system, which catalyzes the hydrolysis of ATP coupled with the electrogenic transport of potassium into the cytoplasm. This subunit binds the periplasmic potassium ions and delivers the ions to the membrane domain of KdpB through an intramembrane tunnel. The protein is Potassium-transporting ATPase potassium-binding subunit of Sorangium cellulosum (strain So ce56) (Polyangium cellulosum (strain So ce56)).